A 420-amino-acid polypeptide reads, in one-letter code: 3-phosphoshikimate 1-carboxyvinyltransferase (420 aa).

Residues Lys-26, Ser-27, and Arg-31 each coordinate 3-phosphoshikimate. Phosphoenolpyruvate is bound at residue Lys-26. Phosphoenolpyruvate contacts are provided by Gly-97 and Arg-125. 3-phosphoshikimate is bound by residues Ser-170, Ser-171, Gln-172, Asp-297, Asn-320, and Lys-324. Gln-172 serves as a coordination point for phosphoenolpyruvate. Catalysis depends on Asp-297, which acts as the Proton acceptor. 3 residues coordinate phosphoenolpyruvate: Arg-328, Arg-375, and Lys-400.

Belongs to the EPSP synthase family. Monomer.

Its subcellular location is the cytoplasm. The enzyme catalyses 3-phosphoshikimate + phosphoenolpyruvate = 5-O-(1-carboxyvinyl)-3-phosphoshikimate + phosphate. It participates in metabolic intermediate biosynthesis; chorismate biosynthesis; chorismate from D-erythrose 4-phosphate and phosphoenolpyruvate: step 6/7. Catalyzes the transfer of the enolpyruvyl moiety of phosphoenolpyruvate (PEP) to the 5-hydroxyl of shikimate-3-phosphate (S3P) to produce enolpyruvyl shikimate-3-phosphate and inorganic phosphate. The sequence is that of 3-phosphoshikimate 1-carboxyvinyltransferase from Rhizobium leguminosarum bv. trifolii (strain WSM2304).